A 75-amino-acid chain; its full sequence is Molt-inhibiting hormone (75 aa).

3 disulfides stabilise this stretch: cysteine 7/cysteine 44, cysteine 24/cysteine 40, and cysteine 27/cysteine 53. Alanine 75 is modified (alanine amide).

It belongs to the arthropod CHH/MIH/GIH/VIH hormone family.

It is found in the secreted. Its function is as follows. Inhibits Y-organs where molting hormone (ecdysteroid) is secreted. A molting cycle is initiated when MIH secretion diminishes or stops. The sequence is that of Molt-inhibiting hormone from Procambarus clarkii (Red swamp crayfish).